Reading from the N-terminus, the 390-residue chain is Coenzyme A biosynthesis bifunctional protein CoaBC (390 aa).

The segment at 1-188 is phosphopantothenoylcysteine decarboxylase; sequence MDKNKHILIG…NQKDYLKNKK (188 aa). The Proton donor role is filled by cysteine 156. Residues 189–390 are phosphopantothenate--cysteine ligase; the sequence is ILITASRTEE…VAKEILKILY (202 aa). CTP contacts are provided by residues aspartate 277, lysine 287, 304–307, phenylalanine 323, lysine 338, and lysine 342; that span reads PDII.

It in the N-terminal section; belongs to the HFCD (homo-oligomeric flavin containing Cys decarboxylase) superfamily. In the C-terminal section; belongs to the PPC synthetase family. Requires Mg(2+) as cofactor. It depends on FMN as a cofactor.

It catalyses the reaction N-[(R)-4-phosphopantothenoyl]-L-cysteine + H(+) = (R)-4'-phosphopantetheine + CO2. The enzyme catalyses (R)-4'-phosphopantothenate + L-cysteine + CTP = N-[(R)-4-phosphopantothenoyl]-L-cysteine + CMP + diphosphate + H(+). Its pathway is cofactor biosynthesis; coenzyme A biosynthesis; CoA from (R)-pantothenate: step 2/5. It functions in the pathway cofactor biosynthesis; coenzyme A biosynthesis; CoA from (R)-pantothenate: step 3/5. Catalyzes two sequential steps in the biosynthesis of coenzyme A. In the first step cysteine is conjugated to 4'-phosphopantothenate to form 4-phosphopantothenoylcysteine. In the second step the latter compound is decarboxylated to form 4'-phosphopantotheine. In Borreliella burgdorferi (strain ATCC 35210 / DSM 4680 / CIP 102532 / B31) (Borrelia burgdorferi), this protein is Coenzyme A biosynthesis bifunctional protein CoaBC.